The sequence spans 1363 residues: MFLILLISLPTAFAVIGDLKCTTVSINDVDTGVPSISTDTVDVTNGLGTYYVLDRVYLNTTLLLNGYYPTSGSTYRNMALKGTLLLSTLWFKPPFLSDFTNGIFAKVKNTKVIKDGVKYSEFPAITIGSTFVNTSYSVVVQPHTTNLDNKLQGLLEISVCQYTMCEYPNTICNPNLGNQRVELWHWDTGVVSCLYKRNFTYDVNADYLYFHFYQEGGTFYAYFTDTGVVTKFLFNVYLGTVLSHYYVMPLTCNSAMTLEYWVTPLTSKQYLLAFNQDGVIFNAVDCKSDFMSEIKCKTLSIAPSTGVYELNGYTVQPIADVYRRIPNLPDCNIEAWLNDKSVPSPLNWERKTFSNCNFNMSSLMSFIQADSFTCNNIDAAKIYGMCFSSITIDKFAIPNGRKVDLQLGNLGYLQSFNYRIDTTATSCQLYYNLPAANVSVSRFNPSIWNRRFGFTEQSVFKPQPAGVFTDHDVVYAQHCFKAPTNFCPCKLDGSLCVGSGSGIDAGYKNTGIGTCPAGTNYLTCHNAAQCGCLCTPDPITSKATGPYKCPQTKYLVGIGEHCSGLAIKSDYCGGNPCSCRPQAFLGWSVDSCLQGDRCNIFANFILHDVNSGTTCSTDLQKSNTDIILGVCVNYDLYGITGQGIFVEVNATYYNSWQNLLYDSNGNLYGFRDYLTNRTFMIRSCYSGRVSAAFHANSSEPALLFRNIKCNYVFNNTLSRQLQPINYFDSYLGCVVNADNSTSSVVQTCDLTVGSGYCVDYSTKRRSRRSITTGYRFTNFEPFTVNSVNDSLEPVGGLYEIQIPSEFTIGNMEEFIQTSSPKVTIDCSAFVCGDYAACKSQLVEYGSFCDNINAILTEVNELLDTTQLQVANSLMNGVTLSTKLKDGVNFNVDDINFSPVLGCLGSDCNKVSSRSAIEDLLFSKVKLSDVGFVEAYNNCTGGAEIRDLICVQSYNGIKVLPPLLSENQISGYTLAATSASLFPPWSAAAGVPFYLNVQYRINGIGVTMDVLSQNQKLIANAFNNALGAIQEGFDATNSALVKIQAVVNANAEALNNLLQQLSNRFGAISSSLQEILSRLDALEAQAQIDRLINGRLTALNAYVSQQLSDSTLVKFSAAQAMEKVNECVKSQSSRINFCGNGNHIISLVQNAPYGLYFIHFSYVPTKYVTAKVSPGLCIAGDRGIAPKSGYFVNVNNTWMFTGSGYYYPEPITGNNVVVMSTCAVNYTKAPDVMLNISTPNLPDFKEELDQWFKNQTSVAPDLSLDYINVTFLDLQDEMNRLQEAIKVLNQSYINLKDIGTYEYYVKWPWYVWLLIGFAGVAMLVLLFFICCCTGCGTSCFKKCGGCCDDYTGHQELVIKTSHDD.

An N-terminal signal peptide occupies residues 1 to 13 (MFLILLISLPTAF). Over 14 to 1307 (AVIGDLKCTT…GTYEYYVKWP (1294 aa)) the chain is Extracellular. In terms of domain architecture, BetaCoV S1-NTD spans 15–298 (VIGDLKCTTV…DFMSEIKCKT (284 aa)). Cystine bridges form between cysteine 21–cysteine 165, cysteine 160–cysteine 193, cysteine 172–cysteine 252, cysteine 286–cysteine 296, and cysteine 331–cysteine 356. Residues asparagine 59 and asparagine 133 are each glycosylated (N-linked (GlcNAc...) asparagine; by host). N-linked (GlcNAc...) asparagine; by host glycosylation occurs at asparagine 198. The BetaCoV S1-CTD domain maps to 329–617 (PDCNIEAWLN…DVNSGTTCST (289 aa)). Asparagine 359 carries an N-linked (GlcNAc...) asparagine; by host glycan. 2 disulfide bridges follow: cysteine 374–cysteine 427 and cysteine 386–cysteine 615. N-linked (GlcNAc...) asparagine; by host glycosylation is found at asparagine 437, asparagine 649, asparagine 676, asparagine 696, asparagine 714, asparagine 739, and asparagine 788. Fusion peptide stretches follow at residues 914–935 (SAIEDLLFSKVKLSDVGFVEAY) and 933–953 (EAYNNCTGGAEIRDLICVQSY). A glycan (N-linked (GlcNAc...) asparagine; by host) is linked at asparagine 937. A disulfide bridge links cysteine 938 with cysteine 949. A heptad repeat 1 region spans residues 1014–1064 (QKLIANAFNNALGAIQEGFDATNSALVKIQAVVNANAEALNNLLQQLSNRF). Residues 1043–1087 (QAVVNANAEALNNLLQQLSNRFGAISSSLQEILSRLDALEAQAQI) are a coiled coil. Asparagine 1194, asparagine 1224, asparagine 1234, asparagine 1253, asparagine 1267, and asparagine 1288 each carry an N-linked (GlcNAc...) asparagine; by host glycan. The heptad repeat 2 stretch occupies residues 1258–1296 (APDLSLDYINVTFLDLQDEMNRLQEAIKVLNQSYINLKD). Residues 1269 to 1297 (TFLDLQDEMNRLQEAIKVLNQSYINLKDI) are a coiled coil. Residues 1308-1328 (WYVWLLIGFAGVAMLVLLFFI) traverse the membrane as a helical segment. At 1329–1363 (CCCTGCGTSCFKKCGGCCDDYTGHQELVIKTSHDD) the chain is on the cytoplasmic side. The short motif at 1359–1363 (TSHDD) is the KxHxx element.

Belongs to the betacoronaviruses spike protein family. As to quaternary structure, homotrimer; each monomer consists of a S1 and a S2 subunit. The resulting peplomers protrude from the virus surface as spikes. In terms of processing, specific enzymatic cleavages in vivo yield mature proteins. The precursor is processed into S1 and S2 by host cell furin or another cellular protease to yield the mature S1 and S2 proteins. Additionally, a second cleavage leads to the release of a fusion peptide after viral attachment to host cell receptor. The cytoplasmic Cys-rich domain is palmitoylated. Spike glycoprotein is digested within host endosomes.

It localises to the virion membrane. It is found in the host endoplasmic reticulum-Golgi intermediate compartment membrane. The protein resides in the host cell membrane. Functionally, attaches the virion to the cell membrane by interacting with host receptor, initiating the infection. Mediates fusion of the virion and cellular membranes by acting as a class I viral fusion protein. Under the current model, the protein has at least three conformational states: pre-fusion native state, pre-hairpin intermediate state, and post-fusion hairpin state. During viral and target cell membrane fusion, the coiled coil regions (heptad repeats) assume a trimer-of-hairpins structure, positioning the fusion peptide in close proximity to the C-terminal region of the ectodomain. The formation of this structure appears to drive apposition and subsequent fusion of viral and target cell membranes. In terms of biological role, acts as a viral fusion peptide which is unmasked following S2 cleavage occurring upon virus endocytosis. In Bos taurus (Bovine), this protein is Spike glycoprotein.